The sequence spans 341 residues: Eukaryotic translation initiation factor 2 subunit 1 (341 aa).

Positions 18–89 constitute an S1 motif domain; sequence NELVMVRIES…DKGYIDLSKR (72 aa). The interval 301-341 is disordered; it reads LMEQLEVENQDGDGEEHEDDDDDDDDEEEEEKPKEKKSSRK. A compositionally biased stretch (acidic residues) spans 303 to 330; sequence EQLEVENQDGDGEEHEDDDDDDDDEEEE. Basic and acidic residues predominate over residues 331-341; it reads EKPKEKKSSRK.

The protein belongs to the eIF-2-alpha family. As to quaternary structure, eukaryotic translation initiation factor 2 eIF2 is a heterotrimeric complex composed of an alpha, a beta and a gamma subunit.

The protein localises to the cytoplasm. It is found in the cytosol. In terms of biological role, eIF-2 functions in the early steps of protein synthesis by forming a ternary complex with GTP and initiator tRNA. This complex binds to a 40S ribosomal subunit, followed by mRNA binding to form a 43S pre-initiation complex. Junction of the 60S ribosomal subunit to form the 80S initiation complex is preceded by hydrolysis of the GTP bound to eIF-2 and release of an eIF-2-GDP binary complex. In order for eIF-2 to recycle and catalyze another round of initiation, the GDP bound to eIF-2 must exchange with GTP by way of a reaction catalyzed by eIF2B. The chain is Eukaryotic translation initiation factor 2 subunit 1 (eif2s1) from Dictyostelium discoideum (Social amoeba).